A 124-amino-acid polypeptide reads, in one-letter code: Small ribosomal subunit protein uS12 (124 aa).

The tract at residues 8-28 is disordered; sequence IRSAREKTDKKTKSPALKSCP. A compositionally biased stretch (basic and acidic residues) spans 10–19; the sequence is SAREKTDKKT. Asp89 bears the 3-methylthioaspartic acid mark.

It belongs to the universal ribosomal protein uS12 family. Part of the 30S ribosomal subunit. Contacts proteins S8 and S17. May interact with IF1 in the 30S initiation complex.

Functionally, with S4 and S5 plays an important role in translational accuracy. Its function is as follows. Interacts with and stabilizes bases of the 16S rRNA that are involved in tRNA selection in the A site and with the mRNA backbone. Located at the interface of the 30S and 50S subunits, it traverses the body of the 30S subunit contacting proteins on the other side and probably holding the rRNA structure together. The combined cluster of proteins S8, S12 and S17 appears to hold together the shoulder and platform of the 30S subunit. The chain is Small ribosomal subunit protein uS12 from Arthrospira platensis (Spirulina platensis).